The following is a 330-amino-acid chain: Replication factor C small subunit (330 aa).

48-55 (GPPGTGKT) contributes to the ATP binding site.

This sequence belongs to the activator 1 small subunits family. RfcS subfamily. In terms of assembly, heteropentamer composed of four small subunits (RfcS) and one large subunit (RfcL). A homotetramer of this subunit interacts with PCNA heterodimer PCNA1-PCNA2.

Functionally, part of the RFC clamp loader complex which loads the PCNA sliding clamp onto DNA. The complex possesses DNA-dependent ATPase activity. The chain is Replication factor C small subunit (rfcS) from Saccharolobus solfataricus (strain ATCC 35092 / DSM 1617 / JCM 11322 / P2) (Sulfolobus solfataricus).